We begin with the raw amino-acid sequence, 680 residues long: Enzymatic polyprotein (680 aa).

Residues 41–131 (LHCFVDTGAS…LYEPFIQFTD (91 aa)) are protease. The active site involves Asp46. One can recognise a Reverse transcriptase domain in the interval 273–453 (LKVIKPSKSP…KKINFLGLEI (181 aa)).

The protein belongs to the caulimoviridae enzymatic polyprotein family.

It carries out the reaction DNA(n) + a 2'-deoxyribonucleoside 5'-triphosphate = DNA(n+1) + diphosphate. Functionally, encodes for at least two polypeptides: protease (PR) and reverse transcriptase (RT). The protease processes the polyprotein in cis. Reverse transcriptase is multifunctional enzyme that converts the viral RNA genome into dsDNA in viral cytoplasmic capsids. This enzyme displays a DNA polymerase activity that can copy either DNA or RNA templates, and a ribonuclease H (RNase H) activity that cleaves the RNA strand of RNA-DNA heteroduplexes in a partially processive 3'- to 5'-endonucleasic mode. Neo-synthesized pregenomic RNA (pgRNA) are encapsidated, and reverse-transcribed inside the nucleocapsid. Partial (+)DNA is synthesized from the (-)DNA template and generates the relaxed circular DNA (RC-DNA) genome. After budding and infection, the RC-DNA migrates in the nucleus, and is converted into a plasmid-like covalently closed circular DNA (cccDNA). This Cauliflower mosaic virus (strain NY8153) (CaMV) protein is Enzymatic polyprotein.